A 219-amino-acid polypeptide reads, in one-letter code: MKNWTDVIGKEKEQPYFQHALQQVHLARANGKTIYPPQEEVFNAFKYTAFEDVKVVILGQDPYHGANQAHGLAFSVKPEVAIPPSLLNMYKELTQDISGFQMPSNGYLVKWAEQGVLLLNTVLTVERGMAHSHANLGWERFTDKVIAVLNEHREKLVFLLWGSHAQKKGQIIDRTRHLVLTAPHPSPLSAHRGFFGCHHFSKTNSYLESNGMKPIDWQI.

The Proton acceptor role is filled by aspartate 61.

The protein belongs to the uracil-DNA glycosylase (UDG) superfamily. UNG family.

It is found in the cytoplasm. It catalyses the reaction Hydrolyzes single-stranded DNA or mismatched double-stranded DNA and polynucleotides, releasing free uracil.. Excises uracil residues from the DNA which can arise as a result of misincorporation of dUMP residues by DNA polymerase or due to deamination of cytosine. The protein is Uracil-DNA glycosylase of Haemophilus influenzae (strain 86-028NP).